A 315-amino-acid chain; its full sequence is Ribose-phosphate pyrophosphokinase (315 aa).

ATP contacts are provided by residues 41-43 and 100-101; these read DGE and RQ. His-134 and Asp-173 together coordinate Mg(2+). The active site involves Lys-196. Residues Arg-198, Asp-222, and 226–230 contribute to the D-ribose 5-phosphate site; that span reads DTAGT.

It belongs to the ribose-phosphate pyrophosphokinase family. Class I subfamily. As to quaternary structure, homohexamer. Mg(2+) serves as cofactor.

It localises to the cytoplasm. It catalyses the reaction D-ribose 5-phosphate + ATP = 5-phospho-alpha-D-ribose 1-diphosphate + AMP + H(+). Its pathway is metabolic intermediate biosynthesis; 5-phospho-alpha-D-ribose 1-diphosphate biosynthesis; 5-phospho-alpha-D-ribose 1-diphosphate from D-ribose 5-phosphate (route I): step 1/1. Involved in the biosynthesis of the central metabolite phospho-alpha-D-ribosyl-1-pyrophosphate (PRPP) via the transfer of pyrophosphoryl group from ATP to 1-hydroxyl of ribose-5-phosphate (Rib-5-P). In Bacillus caldolyticus, this protein is Ribose-phosphate pyrophosphokinase.